Consider the following 312-residue polypeptide: Acetylglutamate kinase (312 aa).

Substrate-binding positions include 74-75, Arg-96, and Asn-195; that span reads GG.

It belongs to the acetylglutamate kinase family. ArgB subfamily.

Its subcellular location is the cytoplasm. The catalysed reaction is N-acetyl-L-glutamate + ATP = N-acetyl-L-glutamyl 5-phosphate + ADP. It participates in amino-acid biosynthesis; L-arginine biosynthesis; N(2)-acetyl-L-ornithine from L-glutamate: step 2/4. Functionally, catalyzes the ATP-dependent phosphorylation of N-acetyl-L-glutamate. This chain is Acetylglutamate kinase, found in Nocardioides sp. (strain ATCC BAA-499 / JS614).